A 219-amino-acid chain; its full sequence is MKLFEIENAVDCRIIGRVNRFVVDVEVDGRRERAYINNTGRLKELIFEGNVGKCLTKRGGKLSYRLFAVSCEGGYALIDTQLQMRAFEVAIPKISWLDGEVRRNVKVGNSIIDYRIGESYVELKSAALKKGIYAMYPDCPTARGRKHLRLLEEIGKRSRALVVFVAALPSVRAFMPNREGDEELYRLIKRSKNVEFRSIQVEYLNGKVFLRNPDLKVVI.

Belongs to the SfsA family.

In Archaeoglobus fulgidus (strain ATCC 49558 / DSM 4304 / JCM 9628 / NBRC 100126 / VC-16), this protein is Sugar fermentation stimulation protein homolog.